A 300-amino-acid polypeptide reads, in one-letter code: MVKQRTLNRVVKASGIGLHSGQKVMINFIPHTVDGGIVFRRIDLDPPVDIPANALLIQEAFMCSNLVTGDIKVGTIEHVMSAIASLGIDNLIVEVSASEVPIMDGSAGPFIYLLMQGGLREQDAPKKFIKILKPVEALIDDKKAIFSPHNGFQLNFTIDFDHPAFAKEYQSATIDFSTETFVYEVSEARTFGFMKDLDYLKANNLALGASLDNAIGVDDTGVVNEEGLRFADEFVRHKILDAVGDLYLLGHQIIAKFDGYKSGHALNNQLLRNVQSDPSNYEIVTFDDEKDCPIPYVSVT.

Zn(2+)-binding residues include His-78, His-237, and Asp-241. His-264 (proton donor) is an active-site residue.

It belongs to the LpxC family. It depends on Zn(2+) as a cofactor.

It catalyses the reaction a UDP-3-O-[(3R)-3-hydroxyacyl]-N-acetyl-alpha-D-glucosamine + H2O = a UDP-3-O-[(3R)-3-hydroxyacyl]-alpha-D-glucosamine + acetate. The protein operates within glycolipid biosynthesis; lipid IV(A) biosynthesis; lipid IV(A) from (3R)-3-hydroxytetradecanoyl-[acyl-carrier-protein] and UDP-N-acetyl-alpha-D-glucosamine: step 2/6. Its function is as follows. Catalyzes the hydrolysis of UDP-3-O-myristoyl-N-acetylglucosamine to form UDP-3-O-myristoylglucosamine and acetate, the committed step in lipid A biosynthesis. The polypeptide is UDP-3-O-acyl-N-acetylglucosamine deacetylase (Acinetobacter baumannii (strain SDF)).